Reading from the N-terminus, the 209-residue chain is MAKNFYDITLALAGICQSARLVQSLAHEGTCDSEALHVSLKSVIDQNPASTLDVFGGREAGLKIGLETLLGMLNTSSRQGLGAELTRYTLSLMVLERKLAASKGAMNTLGNRIADLSRQLEHFELESDTLMSAMAGIYVDVISPLGPRIQVNGSPNVLQSPQIQAKVRATLLAGIRAAVLWQQVGGGRLQLMFSRNRLTTQAKQILAQC.

Positions 95 to 132 (LERKLAASKGAMNTLGNRIADLSRQLEHFELESDTLMS) form a coiled coil.

This sequence belongs to the HflD family.

Its subcellular location is the cytoplasm. The protein localises to the cell inner membrane. The polypeptide is High frequency lysogenization protein HflD homolog (Cronobacter sakazakii (strain ATCC BAA-894) (Enterobacter sakazakii)).